The following is a 274-amino-acid chain: Thiamine kinase (274 aa).

This sequence belongs to the thiamine kinase family.

The catalysed reaction is thiamine + ATP = thiamine phosphate + ADP + H(+). The protein operates within cofactor biosynthesis; thiamine diphosphate biosynthesis; thiamine phosphate from thiamine: step 1/1. Functionally, catalyzes the ATP-dependent phosphorylation of thiamine to thiamine phosphate. Is involved in thiamine salvage. This is Thiamine kinase from Escherichia coli (strain SMS-3-5 / SECEC).